The following is a 130-amino-acid chain: Ribonuclease P protein component 2 (130 aa).

Belongs to the eukaryotic/archaeal RNase P protein component 2 family. As to quaternary structure, consists of a catalytic RNA component and at least 4-5 protein subunits.

The protein resides in the cytoplasm. It catalyses the reaction Endonucleolytic cleavage of RNA, removing 5'-extranucleotides from tRNA precursor.. In terms of biological role, part of ribonuclease P, a protein complex that generates mature tRNA molecules by cleaving their 5'-ends. The polypeptide is Ribonuclease P protein component 2 (Methanococcus vannielii (strain ATCC 35089 / DSM 1224 / JCM 13029 / OCM 148 / SB)).